We begin with the raw amino-acid sequence, 125 residues long: uncharacterized protein (125 aa).

Residues 7–29 (NCMFLYVYTDVCVRLCASIFYIM) traverse the membrane as a helical segment.

The protein localises to the membrane. This is an uncharacterized protein from Saccharomyces cerevisiae (strain ATCC 204508 / S288c) (Baker's yeast).